A 790-amino-acid chain; its full sequence is Kinesin-like protein KIF9 (790 aa).

The 335-residue stretch at 6 to 340 (KVQAFVRVRP…LRFASRMKLV (335 aa)) folds into the Kinesin motor domain. ATP is bound by residues 12-14 (RVR) and 93-100 (GQTGAGKT). Positions 342-442 (TEPAINEKYD…EQEVESALRR (101 aa)) form a coiled coil. The disordered stretch occupies residues 482–521 (GVAPFSVKPGKKPKTKKTPKDQFSSSARKEGASSPVSGKD). At Thr530 the chain carries Phosphothreonine. The disordered stretch occupies residues 547-577 (RERETSSIEPLISDSPKEELRAPRPSTPPSR). A coiled-coil region spans residues 600–695 (KSILNERKKR…YCQRLVDQCR (96 aa)).

It belongs to the TRAFAC class myosin-kinesin ATPase superfamily. Kinesin family. In terms of assembly, interacts with HYDIN. In terms of tissue distribution, highly expressed in the testis (at protein level). Weakly expressed in the brain, thymus, lung and heart.

It localises to the cytoplasm. Its subcellular location is the cytoskeleton. The protein resides in the cell projection. It is found in the cilium. The protein localises to the flagellum. It localises to the flagellum axoneme. In terms of biological role, essential for normal male fertility and for progressive motility of spermatozoa. The sequence is that of Kinesin-like protein KIF9 (Kif9) from Mus musculus (Mouse).